A 111-amino-acid polypeptide reads, in one-letter code: Exocrine gland-secreted peptide 22 (111 aa).

The signal sequence occupies residues 1 to 24 (MNSVPVMLFSISILLAAMLTEGRG).

It belongs to the exocrine gland-secreted peptide family. As to expression, expressed in acinar cells of the lacrimal gland from where it is secreted into tears. Not detected in a range of other tissues tested including other exocrine glands, internal organs and sensory epithelia.

The protein localises to the secreted. Pheromone produced by juveniles which activates a small number of vomeronasal organ sensory neurons and exhibits a powerful inhibitory effect on adult male mating behavior. This chain is Exocrine gland-secreted peptide 22, found in Mus musculus (Mouse).